A 119-amino-acid polypeptide reads, in one-letter code: MVKLAFPRELRLLTPSHFTFVFQQPQRAGTPQITILGRMNSLGHPRIGLTVAKKHVKRAHERNRIKRLTRESFRLHQHSLPSMDFVVLVKKGVSELDNRTLTEALEKLWRRHCRLAPDC.

The protein belongs to the RnpA family. As to quaternary structure, consists of a catalytic RNA component (M1 or rnpB) and a protein subunit.

The catalysed reaction is Endonucleolytic cleavage of RNA, removing 5'-extranucleotides from tRNA precursor.. In terms of biological role, RNaseP catalyzes the removal of the 5'-leader sequence from pre-tRNA to produce the mature 5'-terminus. It can also cleave other RNA substrates such as 4.5S RNA. The protein component plays an auxiliary but essential role in vivo by binding to the 5'-leader sequence and broadening the substrate specificity of the ribozyme. This chain is Ribonuclease P protein component, found in Pectobacterium atrosepticum (strain SCRI 1043 / ATCC BAA-672) (Erwinia carotovora subsp. atroseptica).